A 182-amino-acid chain; its full sequence is Large ribosomal subunit protein uL10 (182 aa).

This sequence belongs to the universal ribosomal protein uL10 family. As to quaternary structure, part of the ribosomal stalk of the 50S ribosomal subunit. The N-terminus interacts with L11 and the large rRNA to form the base of the stalk. The C-terminus forms an elongated spine to which L12 dimers bind in a sequential fashion forming a multimeric L10(L12)X complex.

Its function is as follows. Forms part of the ribosomal stalk, playing a central role in the interaction of the ribosome with GTP-bound translation factors. This Chloroflexus aurantiacus (strain ATCC 29364 / DSM 637 / Y-400-fl) protein is Large ribosomal subunit protein uL10.